Consider the following 289-residue polypeptide: Acetyl-coenzyme A carboxylase carboxyl transferase subunit beta (289 aa).

The region spanning 34–289 (MWVKCNKCGE…KLINMHQNSF (256 aa)) is the CoA carboxyltransferase N-terminal domain. Residues cysteine 38, cysteine 41, cysteine 57, and cysteine 60 each contribute to the Zn(2+) site. A C4-type zinc finger spans residues 38–60 (CNKCGEILYQNDLEKNYMVCNLC).

Belongs to the AccD/PCCB family. Acetyl-CoA carboxylase is a heterohexamer composed of biotin carboxyl carrier protein (AccB), biotin carboxylase (AccC) and two subunits each of ACCase subunit alpha (AccA) and ACCase subunit beta (AccD). Zn(2+) serves as cofactor.

It is found in the cytoplasm. It carries out the reaction N(6)-carboxybiotinyl-L-lysyl-[protein] + acetyl-CoA = N(6)-biotinyl-L-lysyl-[protein] + malonyl-CoA. The protein operates within lipid metabolism; malonyl-CoA biosynthesis; malonyl-CoA from acetyl-CoA: step 1/1. Its function is as follows. Component of the acetyl coenzyme A carboxylase (ACC) complex. Biotin carboxylase (BC) catalyzes the carboxylation of biotin on its carrier protein (BCCP) and then the CO(2) group is transferred by the transcarboxylase to acetyl-CoA to form malonyl-CoA. The polypeptide is Acetyl-coenzyme A carboxylase carboxyl transferase subunit beta (Clostridium botulinum (strain Kyoto / Type A2)).